The sequence spans 80 residues: MARIMEPLARKIFKGVLAAELVGVAGAYCLFKKMHSSQDFRQTMSKKFPFILEVYYKSIEQSGMYGVREKDEEKWLTSKN.

A helical membrane pass occupies residues 15-31; the sequence is GVLAAELVGVAGAYCLF.

It is found in the mitochondrion membrane. The sequence is that of Protein CEBPZOS from Mus musculus (Mouse).